We begin with the raw amino-acid sequence, 433 residues long: Cell division control protein KAR1 (433 aa).

3 disordered regions span residues 1 to 38 (MNVT…SINL), 69 to 101 (TKNI…FYNG), and 207 to 227 (KPLP…TLQR). Position 233 is a phosphothreonine (Thr233).

Interacts with SPC72.

Its subcellular location is the cytoplasm. It localises to the cytoskeleton. The protein resides in the microtubule organizing center. The protein localises to the spindle pole body. In terms of biological role, KAR1 is required for function of both intranuclear and extranuclear microtubules. KAR1 helps localize CDC31 to the spindle pole body (SPB), CDC31 then initiates SPB duplication via interaction with a downstream effector. The chain is Cell division control protein KAR1 (KAR1) from Saccharomyces cerevisiae (strain ATCC 204508 / S288c) (Baker's yeast).